A 181-amino-acid chain; its full sequence is ATP synthase subunit delta (181 aa).

It belongs to the ATPase delta chain family. As to quaternary structure, F-type ATPases have 2 components, F(1) - the catalytic core - and F(0) - the membrane proton channel. F(1) has five subunits: alpha(3), beta(3), gamma(1), delta(1), epsilon(1). F(0) has three main subunits: a(1), b(2) and c(10-14). The alpha and beta chains form an alternating ring which encloses part of the gamma chain. F(1) is attached to F(0) by a central stalk formed by the gamma and epsilon chains, while a peripheral stalk is formed by the delta and b chains.

The protein localises to the cell inner membrane. Its function is as follows. F(1)F(0) ATP synthase produces ATP from ADP in the presence of a proton or sodium gradient. F-type ATPases consist of two structural domains, F(1) containing the extramembraneous catalytic core and F(0) containing the membrane proton channel, linked together by a central stalk and a peripheral stalk. During catalysis, ATP synthesis in the catalytic domain of F(1) is coupled via a rotary mechanism of the central stalk subunits to proton translocation. In terms of biological role, this protein is part of the stalk that links CF(0) to CF(1). It either transmits conformational changes from CF(0) to CF(1) or is implicated in proton conduction. This Aquifex aeolicus (strain VF5) protein is ATP synthase subunit delta.